Reading from the N-terminus, the 693-residue chain is Elongation factor G (693 aa).

The tr-type G domain occupies 8–284 (DMTRNVGIMA…AIVNYMPAPT (277 aa)). GTP contacts are provided by residues 17–24 (AHIDAGKT), 81–85 (DTPGH), and 135–138 (NKMD).

The protein belongs to the TRAFAC class translation factor GTPase superfamily. Classic translation factor GTPase family. EF-G/EF-2 subfamily.

The protein resides in the cytoplasm. Its function is as follows. Catalyzes the GTP-dependent ribosomal translocation step during translation elongation. During this step, the ribosome changes from the pre-translocational (PRE) to the post-translocational (POST) state as the newly formed A-site-bound peptidyl-tRNA and P-site-bound deacylated tRNA move to the P and E sites, respectively. Catalyzes the coordinated movement of the two tRNA molecules, the mRNA and conformational changes in the ribosome. This Fusobacterium nucleatum subsp. nucleatum (strain ATCC 25586 / DSM 15643 / BCRC 10681 / CIP 101130 / JCM 8532 / KCTC 2640 / LMG 13131 / VPI 4355) protein is Elongation factor G.